Reading from the N-terminus, the 455-residue chain is Argininosuccinate lyase (455 aa).

It belongs to the lyase 1 family. Argininosuccinate lyase subfamily.

It is found in the cytoplasm. The catalysed reaction is 2-(N(omega)-L-arginino)succinate = fumarate + L-arginine. It participates in amino-acid biosynthesis; L-arginine biosynthesis; L-arginine from L-ornithine and carbamoyl phosphate: step 3/3. This chain is Argininosuccinate lyase, found in Shewanella halifaxensis (strain HAW-EB4).